Reading from the N-terminus, the 293-residue chain is UDP-3-O-acyl-N-acetylglucosamine deacetylase (293 aa).

The Zn(2+) site is built by His-79, His-236, and Asp-240. Residue His-263 is the Proton donor of the active site.

Belongs to the LpxC family. Zn(2+) is required as a cofactor.

The catalysed reaction is a UDP-3-O-[(3R)-3-hydroxyacyl]-N-acetyl-alpha-D-glucosamine + H2O = a UDP-3-O-[(3R)-3-hydroxyacyl]-alpha-D-glucosamine + acetate. The protein operates within glycolipid biosynthesis; lipid IV(A) biosynthesis; lipid IV(A) from (3R)-3-hydroxytetradecanoyl-[acyl-carrier-protein] and UDP-N-acetyl-alpha-D-glucosamine: step 2/6. Functionally, catalyzes the hydrolysis of UDP-3-O-myristoyl-N-acetylglucosamine to form UDP-3-O-myristoylglucosamine and acetate, the committed step in lipid A biosynthesis. This is UDP-3-O-acyl-N-acetylglucosamine deacetylase from Phenylobacterium zucineum (strain HLK1).